Here is a 173-residue protein sequence, read N- to C-terminus: 2-C-methyl-D-erythritol 2,4-cyclodiphosphate synthase (173 aa).

Positions 17 and 19 each coordinate a divalent metal cation. 4-CDP-2-C-methyl-D-erythritol 2-phosphate is bound by residues 17-19 (DVH) and 49-50 (HS). His57 contributes to the a divalent metal cation binding site. 4-CDP-2-C-methyl-D-erythritol 2-phosphate contacts are provided by residues 76–80 (FPNTD), 147–150 (TTTE), and Arg157.

Belongs to the IspF family. As to quaternary structure, homotrimer. The cofactor is a divalent metal cation.

The catalysed reaction is 4-CDP-2-C-methyl-D-erythritol 2-phosphate = 2-C-methyl-D-erythritol 2,4-cyclic diphosphate + CMP. The protein operates within isoprenoid biosynthesis; isopentenyl diphosphate biosynthesis via DXP pathway; isopentenyl diphosphate from 1-deoxy-D-xylulose 5-phosphate: step 4/6. Its function is as follows. Involved in the biosynthesis of isopentenyl diphosphate (IPP) and dimethylallyl diphosphate (DMAPP), two major building blocks of isoprenoid compounds. Catalyzes the conversion of 4-diphosphocytidyl-2-C-methyl-D-erythritol 2-phosphate (CDP-ME2P) to 2-C-methyl-D-erythritol 2,4-cyclodiphosphate (ME-CPP) with a corresponding release of cytidine 5-monophosphate (CMP). The chain is 2-C-methyl-D-erythritol 2,4-cyclodiphosphate synthase from Ehrlichia ruminantium (strain Gardel).